The following is a 409-amino-acid chain: Na(+)/H(+) antiporter NhaA (409 aa).

11 helical membrane passes run 13-33 (SGGILLMIATVAALLCQNTFL), 58-78 (LILWVNDGLMAVFFFLIGLEL), 93-113 (IALPAIGAAGGLIVPAVIFYL), 120-140 (FALGGWAIPTATDIAFALGIL), 153-173 (IFLMTLAIVDDLCAIVIIALF), 176-196 (SELSAQMLAVASVCLAALFAL), 216-236 (VAVLKSGVHATLAGVVAAFFI), 256-276 (LHGWVAFGVLPIFAFVNAGIS), 279-299 (GVGLDEILSPVALGTALGLFV), 326-346 (FIQLYGIAVLCGVGFTMSLFI), and 363-383 (LAILLGSVVSGAAGFILLKFS).

The protein belongs to the NhaA Na(+)/H(+) (TC 2.A.33) antiporter family.

It is found in the cell inner membrane. It carries out the reaction Na(+)(in) + 2 H(+)(out) = Na(+)(out) + 2 H(+)(in). Na(+)/H(+) antiporter that extrudes sodium in exchange for external protons. The chain is Na(+)/H(+) antiporter NhaA from Campylobacter concisus (strain 13826).